The sequence spans 202 residues: Transcriptional regulator GfcR 2 (202 aa).

The protein belongs to the purine/pyrimidine phosphoribosyltransferase family. GfcR subfamily.

This is Transcriptional regulator GfcR 2 from Methanosarcina barkeri (strain Fusaro / DSM 804).